The sequence spans 1394 residues: MNQEVLNIFNPVQAAPTFDQIRISLASPEKIRSWSFGEIKKPETINYRTFKPERDGLFCARIFGPTKDYECLCGKYKRMKYKGIICEKCGVEVTLARVRRERMGHIELASPVAHIWFLKSLPSRIAMMLDMPLKDIERVLYFEYYIVTEPGLTPLKQHQLLSEDDFMRAQDEYGDDSFTAEIGAEAIQNLLKAIDLDKEAERLREELAGTVSDMKQKKFSKRLKILEAFSESGNRPEWMVLTVVPVIPPELRPLVPLDGGRFATSDLNDLYRRVINRNNRLKRLIELRAPDIIIRNEKRMLQESVDALFDNGRRGRVITGANKRPLKSLADMLKGKQGRFRQNLLGKRVDYSGRSVIVVGPDLKLHECGLPKKMALELFKPFIYARLDAKGLSGTVKQSKRMVEREQPQVWDILEEVIREHPVMLNRAPTLHRLGIQAFEPKLIEGKAIQLHPLVCAAFNADFDGDQMAVHVPLSLEAQLEARVLMMSTNNILSPANGRPIIVPSQDIVLGLYYLSVAREGEPGEGKIFADLGEIEAAMDAGVVSLHAKIKSRFTEMDADGVVRRRVIDTTPGRMKIAALLPQHTAIGHRLIEKALTKKEIGNLIDVVYRHCGQKATVIFADQIMGLGFKEAAKAGISFGKDDIIIPKRKEAIVAETRTLAEEYEQQYADGLITKGEKYNKVVDAWAKATDRVADEMMAELQMKHKDENGREKEINAIYMMAHSGARGSQAQMKQLGGMRGLMAKPSGEIIETPIVSNFKEGLTVQEYFNSTHGARKGLADTALKTANSGYLTRRLVDVAQDCIIVEEDCGTTRGITLRAVVEGGDVLVSLGARVLGRFSAEDIKDPATGEIVVPADTYLTENMADLIEAAAVQSVKVRSVLTCEAKIGVCGACYGRDLARGTPVNIGEAVGVIAAQSIGEPGTQLTMRTFHIGGTAQVAEQSFFESSNDGTVRVTGATVVGTDGFLVVMSRNTAVSVLVDGKERENYKPPYGARLKIKDGDKVKRGQRLADWDPYTTPIITEVAGKIRAEDLVDGFSVREETDEATGIAQRVIADWRTSARASDLRPAMGVLAEDGSYVRLANGGEARYLMSVGAILSVGDGDMVKPGEVIARIPTEGAKTRDITGGLPRVAELFEARRPKDCAVIAEMDGRVEFGKDYKNKRRIKITPEVDADGNQGEPVEFLIPKGKHIAVHDGDFIARGEYIIDGNPDPHDILRILGVEALANFLVDEIQEVYRLQGVPINDKHIETIVRQMLQKVEILEPGDTGLIKGDHLDKPEFYVEQDRAVARGGRPATTQPVLLGITKASLQTKSFISAASFQETTRVLTEASVHGKTDTLEGLKENVIVGRLIPAGTGSYLRSLQRVAAKRDEQLAQQREDAMEPLPAVIAEEA.

Zn(2+) contacts are provided by Cys-71, Cys-73, Cys-86, and Cys-89. Mg(2+)-binding residues include Asp-462, Asp-464, and Asp-466. Positions 810, 884, 891, and 894 each coordinate Zn(2+).

The protein belongs to the RNA polymerase beta' chain family. The RNAP catalytic core consists of 2 alpha, 1 beta, 1 beta' and 1 omega subunit. When a sigma factor is associated with the core the holoenzyme is formed, which can initiate transcription. It depends on Mg(2+) as a cofactor. Zn(2+) is required as a cofactor.

The catalysed reaction is RNA(n) + a ribonucleoside 5'-triphosphate = RNA(n+1) + diphosphate. Functionally, DNA-dependent RNA polymerase catalyzes the transcription of DNA into RNA using the four ribonucleoside triphosphates as substrates. The sequence is that of DNA-directed RNA polymerase subunit beta' from Caulobacter sp. (strain K31).